The following is a 130-amino-acid chain: Large ribosomal subunit protein bL17 (130 aa).

Belongs to the bacterial ribosomal protein bL17 family. Part of the 50S ribosomal subunit. Contacts protein L32.

This Shewanella loihica (strain ATCC BAA-1088 / PV-4) protein is Large ribosomal subunit protein bL17.